We begin with the raw amino-acid sequence, 156 residues long: uncharacterized protein (156 aa).

2 helical membrane-spanning segments follow: residues 46 to 66 (GLVL…AGVV) and 114 to 134 (IIDI…IVAL).

It localises to the cell membrane. This is an uncharacterized protein from Haemophilus influenzae (strain ATCC 51907 / DSM 11121 / KW20 / Rd).